A 1271-amino-acid polypeptide reads, in one-letter code: MEAVKTFNSELYSLNDYKPPISKAKMTQITKAAIKAIKFYKHVVQSVEKFIQKCKPEYKVPGLYVIDSIVRQSRHQFGQEKDVFAPRFSNNIISTFQNLYRCPGDDKSKIVRVLNLWQKNNVFKSEIIQPLLDMAAGIPPPVVTPVLASTTTAMSNTPGTPVTPVTPANVVQGLPDPWVSQITNTDTLAAVAQILQSPQGQQLQQLIQTLQIQQQKPQPSILQALDAGLVVQLQALTAQLTAAAAAANTLTPLEQGVSFNKKLMDRFDFGEDSEHSEEPKKEIPASQLSHVSESVNNSIFHQIAEQLQQQNLEHLRQQLLEQQQPQKATPQDSQEGTFGSEHSASPSQGSSQQHFLEPEVNLDDSIDIQQQDMDIDEGQDGVEEEVFEQEAKKVAVRSRSRTHSRSRSRSPRKRRSRSRSGSRKRKHRKRSRSRSRERKRKSSRSYSSERRAREREKERQKKGLPPIRSKTLSVCSTTLWVGQVDKKATQQDLTNLFEEFGQIESINMIPPRGCAYVCMVHRQDAFRALQKLSSGSYKIGSKVIKIAWALNKGVKTEYKQFWDVDLGVTYIPWEKVKVDDLEGFAEGGMIDQETVNTEWETVKSSEPVKETVQTTQSPTPVEKETVVTTQAEVFPPPVAMLQIPVAPAVPTVSLVPPAFPVSMPVPPPGFSPIPPPPFLRASFNPSQPPPGFMPPPVPPPVVPPPTIPPVVPTSLVQPSLSMTPETVKDVGFGSLVIPGGSVASNLATSALPAGNVFNAPTKQAEPEEKVPHLIDHQISSGENTRSVIPNDISSNAAILGGQPPNVTSNSGILGVQRPNVSSNSEILGVRPSNVSSSSGIIAAQPPNILNNSGILGIQPPSVSNSSGLLGVLPPNIPNNSGLVGVQPPNVPNTPGLLGTQPPAGPQNLPPLSIPNQRMPTMPMLDIRPGLIPQAPGPRFPLIQPGIPPQRGIPPPSVLDSALHPPPRGPFPPGDIFSQPERPFLAPGRQSVDNVTNPEKRIPLGNDNIQQEGDRDYRFPPIETRESISRPPPVDVRDVVGRPIDPREGPGRPPLDGRDHFGRPPVDIRENLVRPGIDHLGRRDHFGFNPEKPWGHRGDFDEREHRVLPVYGGPKGLHEERGRFRSGNYRFDPRSGPWNRGFGQEVHRDFDDRRRPWERQRDRDDRDFDFCREMNGNRLGRDRIQNTWVPPPHARVFDYFEGATSQRKGDNVPQVNGENTERHAQPPPIPVQNDPELYEKLTSSNEINKEKSDTVADIESEPVVESTETEGT.

The region spanning 1 to 139 (MEAVKTFNSE…PLLDMAAGIP (139 aa)) is the CID domain. Thr-6 is modified (phosphothreonine). A Glycyl lysine isopeptide (Lys-Gly) (interchain with G-Cter in SUMO1) cross-link involves residue Lys-18. A compositionally biased stretch (basic and acidic residues) spans 270–283 (GEDSEHSEEPKKEI). 3 disordered regions span residues 270–289 (GEDSEHSEEPKKEIPASQLS), 322–354 (QQQPQKATPQDSQEGTFGSEHSASPSQGSSQQH), and 384–468 (EEVF…PPIR). Ser-273 bears the Phosphoserine mark. Polar residues predominate over residues 327–354 (KATPQDSQEGTFGSEHSASPSQGSSQQH). Basic residues predominate over residues 394-443 (VAVRSRSRTHSRSRSRSPRKRRSRSRSGSRKRKHRKRSRSRSRERKRKSS). Positions 447–461 (SSERRAREREKERQK) are enriched in basic and acidic residues. The region spanning 477–551 (TTLWVGQVDK…KVIKIAWALN (75 aa)) is the RRM domain. Position 615 is a phosphothreonine (Thr-615). A phosphoserine mark is found at Ser-617 and Ser-779. A disordered region spans residues 899-918 (TQPPAGPQNLPPLSIPNQRM). Over residues 902-912 (PAGPQNLPPLS) the composition is skewed to pro residues. 3 positions are modified to asymmetric dimethylarginine: Arg-917, Arg-927, and Arg-938. Pro residues-rich tracts occupy residues 945–956 (GIPPQRGIPPPS) and 963–972 (HPPPRGPFPP). A disordered region spans residues 945-1064 (GIPPQRGIPP…DGRDHFGRPP (120 aa)). 2 stretches are compositionally biased toward basic and acidic residues: residues 1011–1027 (EGDRDYRFPPIETRESI) and 1034–1064 (DVRDVVGRPIDPREGPGRPPLDGRDHFGRPP). Arg-1073 carries the asymmetric dimethylarginine modification. Residues 1198–1271 (YFEGATSQRK…VVESTETEGT (74 aa)) form a disordered region. Acidic residues predominate over residues 1255–1271 (ADIESEPVVESTETEGT).

In terms of assembly, interacts with POLR2A; via C-terminal heptapeptide repeat domain (CTD) phosphorylated at 'Ser-2' and 'Ser-5'. Identified in a complex with CDC5L and other spliceosomal proteins.

It localises to the nucleus. The protein localises to the nucleus matrix. Functionally, anti-terminator protein required to prevent early mRNA termination during transcription. Together with SCAF4, acts by suppressing the use of early, alternative poly(A) sites, thereby preventing the accumulation of non-functional truncated proteins. Mechanistically, associates with the phosphorylated C-terminal heptapeptide repeat domain (CTD) of the largest RNA polymerase II subunit (POLR2A), and subsequently binds nascent RNA upstream of early polyadenylation sites to prevent premature mRNA transcript cleavage and polyadenylation. Independently of SCAF4, also acts as a positive regulator of transcript elongation. This chain is SR-related and CTD-associated factor 8, found in Homo sapiens (Human).